The chain runs to 182 residues: Bifunctional protein PyrR (182 aa).

Residues 99 to 111 (IVLVDDVIFTGRT) carry the PRPP-binding motif.

Belongs to the purine/pyrimidine phosphoribosyltransferase family. PyrR subfamily. As to quaternary structure, homodimer and homohexamer; in equilibrium.

It catalyses the reaction UMP + diphosphate = 5-phospho-alpha-D-ribose 1-diphosphate + uracil. In terms of biological role, regulates transcriptional attenuation of the pyrimidine nucleotide (pyr) operon by binding in a uridine-dependent manner to specific sites on pyr mRNA. This disrupts an antiterminator hairpin in the RNA and favors formation of a downstream transcription terminator, leading to a reduced expression of downstream genes. Also displays a weak uracil phosphoribosyltransferase activity which is not physiologically significant. The chain is Bifunctional protein PyrR from Caldicellulosiruptor saccharolyticus (strain ATCC 43494 / DSM 8903 / Tp8T 6331).